The chain runs to 391 residues: Cell cycle checkpoint control protein RAD9A (391 aa).

Y28 bears the Phosphotyrosine mark. The interval 51–91 is possesses 3'-5' exonuclease activity; that stretch reads FLFAPLFFQQYQAATPGQDLLRCKILMKSFLSVFRSLAMLE. The interval 266–391 is sufficient for interaction with ABL1; that stretch reads SDTDSHSQDL…VLAEDSEGEG (126 aa). Over residues 268–282 the composition is skewed to basic and acidic residues; the sequence is TDSHSQDLGSPERHQ. 2 disordered regions span residues 268–301 and 319–391; these read TDSH…FAND and SRVL…EGEG. Phosphoserine is present on residues S272, S277, and S328. At S341 the chain carries Phosphoserine; by CK2. Phosphoserine occurs at positions 375 and 380. S387 carries the phosphoserine; by CK2 modification.

It belongs to the rad9 family. As to quaternary structure, component of the toroidal 9-1-1 (RAD9-RAD1-HUS1) complex, composed of RAD9A, RAD1 and HUS1. The 9-1-1 complex associates with LIG1, POLB, FEN1, RAD17, HDAC1, RPA1 and RPA2. The 9-1-1 complex associates with the RAD17-RFC complex. RAD9A interacts with BCL2L1, FEN1, RAD9B, ABL1, RPA1, ATAD5 and RPA2. Interacts with DNAJC7. Interacts (when phosphorylated) with TOPBP1. Constitutively phosphorylated on serine and threonine amino acids in absence of DNA damage. Hyperphosphorylated by PRKCD and ABL1 upon DNA damage. Its phosphorylation by PRKCD may be required for the formation of the 9-1-1 complex. Phosphorylated at Ser-341 and Ser-387 by CK2, promoting interaction with TOPBP1.

The protein localises to the nucleus. It carries out the reaction Exonucleolytic cleavage in the 3'- to 5'-direction to yield nucleoside 5'-phosphates.. Functionally, component of the 9-1-1 cell-cycle checkpoint response complex that plays a major role in DNA repair. The 9-1-1 complex is recruited to DNA lesion upon damage by the RAD17-replication factor C (RFC) clamp loader complex. Acts then as a sliding clamp platform on DNA for several proteins involved in long-patch base excision repair (LP-BER). The 9-1-1 complex stimulates DNA polymerase beta (POLB) activity by increasing its affinity for the 3'-OH end of the primer-template and stabilizes POLB to those sites where LP-BER proceeds; endonuclease FEN1 cleavage activity on substrates with double, nick, or gap flaps of distinct sequences and lengths; and DNA ligase I (LIG1) on long-patch base excision repair substrates. The 9-1-1 complex is necessary for the recruitment of RHNO1 to sites of double-stranded breaks (DSB) occurring during the S phase. RAD9A possesses 3'-&gt;5' double stranded DNA exonuclease activity. This Homo sapiens (Human) protein is Cell cycle checkpoint control protein RAD9A (RAD9A).